The sequence spans 234 residues: MKIEYFGHSAFKIVSEEGLIMLIDPFISNNPLCSTPVETIDADVILITHGHSDHFGDALEIANNSGATIIATAEIANFVQRQGINAIAMNIGGTVSINNLVNVTMTDARHTSSIDFTEEVEEGGSATGFVITLESGKKIYHAGDTGLFGDMKTVIGDIYKPDIALIPIGDKYTMGIEDAAIAAKWLQSRIVIPMHYNTFPGIEQDVELFAKNVEDEIIGTMTVPLMPGEDYREE.

This sequence belongs to the UPF0173 family.

This is UPF0173 metal-dependent hydrolase Msp_0516 from Methanosphaera stadtmanae (strain ATCC 43021 / DSM 3091 / JCM 11832 / MCB-3).